The primary structure comprises 928 residues: Heme/hemopexin-binding protein (928 aa).

Positions 1 to 21 (MYKLNVISLIILTTCSGAAYA) are cleaved as a signal peptide. 10 consecutive repeat copies span residues 101-106 (NGKVYL), 149-154 (KDRQVL), 155-160 (KEGLVL), 161-166 (KDGQVV), 167-172 (KEGQVI), 205-210 (NGKVYL), 279-284 (NGKVVL), 410-415 (NGKVNL), 635-640 (NGFVHL), and 674-679 (NGKVSM). The tract at residues 101–679 (NGKVYLANPN…RLGMNGKVSM (579 aa)) is 6 X 6 AA approximate repeats. Residues 149–172 (KDRQVLKEGLVLKDGQVVKEGQVI) are 4 X 6 AA approximate tandem repeats.

It localises to the secreted. Binds heme/hemopexin complexes. In Haemophilus influenzae, this protein is Heme/hemopexin-binding protein (hxuA).